We begin with the raw amino-acid sequence, 489 residues long: MSADFGLIGLAVMGQNLILNAADHGFTVCAYNRTQSKVDHFLANEAKGKSIIGATSIEDFISKLKRPRKVMLLVKAGAPVDALINQIVPLLEKGDIIIDGGNSHFPDSNRRYEELKKKGILFVGSGVSGGEEGARYGPSLMPGGSEEAWPHIKNIFQSISAKSDGEPCCEWVGPAGAGHYVKMVHNGIEYGDMQLICEAYDIMKRLGGFTDKEISDVFAKWNNGVLDSFLVEITRDILKFDDVDGKPLVEKIMDTAGQKGTGKWTAINALDLGMPVTLIGEAVFARCLSALKNERIRASKVLPGPEVPKDAVKDREQFVDDLEQALYASKIISYAQGFMLIREAAATYGWKLNNPAIALMWRGGCIIRSVFLGQITKAYREEPDLENLLFNKFFADAVTKAQSGWRKSIALATTYGIPTPAFSTALSFYDGYRSERLPANLLQAQRDYFGAHTFRVLPECASDNLPVDKDIHINWTGHGGNVSSSTYQA.

Residues 9–14 (GLAVMG) and 32–34 (NRT) each bind NADP(+). At Ser50 the chain carries Phosphoserine. Residues 74 to 76 (VKA) and Asn102 each bind NADP(+). Substrate contacts are provided by residues Asn102 and 128–130 (SGG). The active-site Proton acceptor is Lys182. 185-186 (HN) serves as a coordination point for substrate. Residue Glu189 is the Proton donor of the active site. 5 residues coordinate substrate: Tyr190, Lys259, Arg286, Arg446, and His452.

Belongs to the 6-phosphogluconate dehydrogenase family. Homodimer.

It is found in the cytoplasm. The catalysed reaction is 6-phospho-D-gluconate + NADP(+) = D-ribulose 5-phosphate + CO2 + NADPH. It functions in the pathway carbohydrate degradation; pentose phosphate pathway; D-ribulose 5-phosphate from D-glucose 6-phosphate (oxidative stage): step 3/3. Catalyzes the oxidative decarboxylation of 6-phosphogluconate to ribulose 5-phosphate and CO(2), with concomitant reduction of NADP to NADPH. The polypeptide is 6-phosphogluconate dehydrogenase, decarboxylating 1 (GND1) (Saccharomyces cerevisiae (strain ATCC 204508 / S288c) (Baker's yeast)).